Here is a 1088-residue protein sequence, read N- to C-terminus: Ran-binding protein 17 (1088 aa).

Alanine 2 bears the N-acetylalanine mark. Serine 569 carries the phosphoserine modification.

This sequence belongs to the exportin family. In terms of assembly, binds to nucleoporins and the GTP-bound form of Ran. Highly expressed in primary spermatocytes and very weakly in pancreas.

It localises to the cytoplasm. Its subcellular location is the nucleus. It is found in the nuclear pore complex. May function as a nuclear transport receptor. The protein is Ran-binding protein 17 (Ranbp17) of Mus musculus (Mouse).